The following is a 249-amino-acid chain: UPF0246 protein Lreu_0493 (249 aa).

This sequence belongs to the UPF0246 family.

This Limosilactobacillus reuteri (strain DSM 20016) (Lactobacillus reuteri) protein is UPF0246 protein Lreu_0493.